We begin with the raw amino-acid sequence, 398 residues long: Mannitol-1-phosphate 5-dehydrogenase (398 aa).

An NAD(+)-binding site is contributed by 10–21 (AVHFGAGNIGRG). Lys221 is a catalytic residue.

Belongs to the mannitol dehydrogenase family. As to quaternary structure, monomer.

It catalyses the reaction D-mannitol 1-phosphate + NAD(+) = beta-D-fructose 6-phosphate + NADH + H(+). Catalyzes the NAD(H)-dependent interconversion of D-fructose 6-phosphate and D-mannitol 1-phosphate in the mannitol metabolic pathway. The polypeptide is Mannitol-1-phosphate 5-dehydrogenase (Chaetomium globosum (strain ATCC 6205 / CBS 148.51 / DSM 1962 / NBRC 6347 / NRRL 1970) (Soil fungus)).